The following is a 30-amino-acid chain: Fibrinogen (30 aa).

In terms of assembly, homodimer. Secreted into the hemolymph.

Its subcellular location is the secreted. The protein localises to the extracellular space. Clotting protein. In Panulirus interruptus (California spiny lobster), this protein is Fibrinogen.